The sequence spans 157 residues: S-ribosylhomocysteine lyase (157 aa).

Positions 54, 58, and 124 each coordinate Fe cation.

The protein belongs to the LuxS family. As to quaternary structure, homodimer. Fe cation serves as cofactor.

It carries out the reaction S-(5-deoxy-D-ribos-5-yl)-L-homocysteine = (S)-4,5-dihydroxypentane-2,3-dione + L-homocysteine. Functionally, involved in the synthesis of autoinducer 2 (AI-2) which is secreted by bacteria and is used to communicate both the cell density and the metabolic potential of the environment. The regulation of gene expression in response to changes in cell density is called quorum sensing. Catalyzes the transformation of S-ribosylhomocysteine (RHC) to homocysteine (HC) and 4,5-dihydroxy-2,3-pentadione (DPD). In Pediococcus pentosaceus (strain ATCC 25745 / CCUG 21536 / LMG 10740 / 183-1w), this protein is S-ribosylhomocysteine lyase.